We begin with the raw amino-acid sequence, 142 residues long: Hemoglobin subunit alpha-1 (142 aa).

The Globin domain maps to 2–142 (VLSADDKSNV…VSTVLTSKYR (141 aa)). His59 is a binding site for O2. His88 is a heme b binding site.

The protein belongs to the globin family. As to quaternary structure, heterotetramer of two alpha chains and two beta chains. As to expression, red blood cells.

Involved in oxygen transport from the lung to the various peripheral tissues. Functionally, hemopressin acts as an antagonist peptide of the cannabinoid receptor CNR1. Hemopressin-binding efficiently blocks cannabinoid receptor CNR1 and subsequent signaling. The chain is Hemoglobin subunit alpha-1 (HBA1) from Equus quagga burchellii (Burchell's zebra).